The sequence spans 174 residues: ATP-dependent protease subunit HslV (174 aa).

T2 is an active-site residue. Residues A157, C160, and T163 each contribute to the Na(+) site.

This sequence belongs to the peptidase T1B family. HslV subfamily. A double ring-shaped homohexamer of HslV is capped on each side by a ring-shaped HslU homohexamer. The assembly of the HslU/HslV complex is dependent on binding of ATP.

The protein localises to the cytoplasm. It catalyses the reaction ATP-dependent cleavage of peptide bonds with broad specificity.. Allosterically activated by HslU binding. Its function is as follows. Protease subunit of a proteasome-like degradation complex believed to be a general protein degrading machinery. The chain is ATP-dependent protease subunit HslV from Shewanella baltica (strain OS195).